Here is a 290-residue protein sequence, read N- to C-terminus: 33 kDa chaperonin (290 aa).

2 cysteine pairs are disulfide-bonded: Cys-235-Cys-237 and Cys-268-Cys-271.

Belongs to the HSP33 family. In terms of processing, under oxidizing conditions two disulfide bonds are formed involving the reactive cysteines. Under reducing conditions zinc is bound to the reactive cysteines and the protein is inactive.

Its subcellular location is the cytoplasm. Redox regulated molecular chaperone. Protects both thermally unfolding and oxidatively damaged proteins from irreversible aggregation. Plays an important role in the bacterial defense system toward oxidative stress. In Streptococcus gordonii (strain Challis / ATCC 35105 / BCRC 15272 / CH1 / DL1 / V288), this protein is 33 kDa chaperonin.